Consider the following 910-residue polypeptide: Protein translocase subunit SecA 1 (910 aa).

Residues Gln-86, Gly-104–Thr-108, and Asp-512 contribute to the ATP site. 4 residues coordinate Zn(2+): Cys-894, Cys-896, Cys-905, and His-906.

This sequence belongs to the SecA family. In terms of assembly, monomer and homodimer. Part of the essential Sec protein translocation apparatus which comprises SecA, SecYEG and auxiliary proteins SecDF-YajC and YidC. Zn(2+) is required as a cofactor.

Its subcellular location is the cell inner membrane. The protein resides in the cytoplasm. The catalysed reaction is ATP + H2O + cellular proteinSide 1 = ADP + phosphate + cellular proteinSide 2.. Functionally, part of the Sec protein translocase complex. Interacts with the SecYEG preprotein conducting channel. Has a central role in coupling the hydrolysis of ATP to the transfer of proteins into and across the cell membrane, serving both as a receptor for the preprotein-SecB complex and as an ATP-driven molecular motor driving the stepwise translocation of polypeptide chains across the membrane. In Bordetella avium (strain 197N), this protein is Protein translocase subunit SecA 1.